The sequence spans 292 residues: 5,10-methylenetetrahydrofolate reductase (292 aa).

The Proton donor/acceptor role is filled by Glu-28. Position 59 (Thr-59) interacts with NADH. Positions 60, 62, 88, 118, 119, 120, 132, 152, 156, 165, 168, 171, and 172 each coordinate FAD. Asp-120 contacts (6S)-5-methyl-5,6,7,8-tetrahydrofolate. Gln-183 lines the NADH pocket. Gln-183 is a (6S)-5-methyl-5,6,7,8-tetrahydrofolate binding site.

Belongs to the methylenetetrahydrofolate reductase family. Requires FAD as cofactor.

It catalyses the reaction (6S)-5-methyl-5,6,7,8-tetrahydrofolate + NAD(+) = (6R)-5,10-methylene-5,6,7,8-tetrahydrofolate + NADH + H(+). It functions in the pathway one-carbon metabolism; tetrahydrofolate interconversion. It participates in amino-acid biosynthesis; L-methionine biosynthesis via de novo pathway. Catalyzes the NADH-dependent reduction of 5,10-methylenetetrahydrofolate to 5-methyltetrahydrofolate. Is required to provide the methyl group necessary for methionine synthetase to convert homocysteine to methionine; the methyl group is given by 5-methyltetrahydrofolate. This Buchnera aphidicola subsp. Acyrthosiphon pisum (strain APS) (Acyrthosiphon pisum symbiotic bacterium) protein is 5,10-methylenetetrahydrofolate reductase (metF).